The chain runs to 162 residues: Probable chemoreceptor glutamine deamidase CheD (162 aa).

Belongs to the CheD family.

It carries out the reaction L-glutaminyl-[protein] + H2O = L-glutamyl-[protein] + NH4(+). Its function is as follows. Probably deamidates glutamine residues to glutamate on methyl-accepting chemotaxis receptors (MCPs), playing an important role in chemotaxis. The chain is Probable chemoreceptor glutamine deamidase CheD from Clostridium botulinum (strain Eklund 17B / Type B).